The following is a 431-amino-acid chain: Transcription factor Sp7 (431 aa).

The segment at serine 30–alanine 56 is disordered. N6-propionyllysine occurs at positions 41 and 45. Residue lysine 58 forms a Glycyl lysine isopeptide (Lys-Gly) (interchain with G-Cter in ubiquitin) linkage. Disordered stretches follow at residues threonine 71–glycine 115 and threonine 154–tyrosine 260. Residues threonine 156 to glycine 164 carry the 9aaTAD motif. Gly residues predominate over residues asparagine 166–leucine 178. Lysine 230 is covalently cross-linked (Glycyl lysine isopeptide (Lys-Gly) (interchain with G-Cter in ubiquitin)). C2H2-type zinc fingers lie at residues histidine 294–histidine 318, phenylalanine 324–histidine 348, and phenylalanine 354–histidine 376. N6-propionyllysine is present on residues lysine 361 and lysine 371. The disordered stretch occupies residues aspartate 367–isoleucine 431. Residues serine 403–proline 412 are compositionally biased toward polar residues.

Belongs to the Sp1 C2H2-type zinc-finger protein family. In terms of assembly, interacts with RIOX1; the interaction is direct and inhibits transcription activator activity. Post-translationally, ubiquitination at leads to proteasomal degradation. SP7 is a short-live protein with an endogenous half-life of approximately 12 hours. Propionylated. Depropionylation at Lys-371 by SIRT7 activates transcription factor activity and positively regulates bone formation by osteoblasts. In terms of tissue distribution, restricted to bone-derived cell.

Its subcellular location is the nucleus. Functionally, transcriptional activator essential for osteoblast differentiation. Binds to SP1 and EKLF consensus sequences and to other G/C-rich sequences. The protein is Transcription factor Sp7 (SP7) of Homo sapiens (Human).